A 203-amino-acid chain; its full sequence is Urease accessory protein UreG (203 aa).

14 to 21 contributes to the GTP binding site; sequence GPVGSGKT.

This sequence belongs to the SIMIBI class G3E GTPase family. UreG subfamily. Homodimer. UreD, UreF and UreG form a complex that acts as a GTP-hydrolysis-dependent molecular chaperone, activating the urease apoprotein by helping to assemble the nickel containing metallocenter of UreC. The UreE protein probably delivers the nickel.

The protein resides in the cytoplasm. Facilitates the functional incorporation of the urease nickel metallocenter. This process requires GTP hydrolysis, probably effectuated by UreG. The chain is Urease accessory protein UreG from Rhizobium leguminosarum bv. trifolii (strain WSM2304).